The primary structure comprises 154 residues: Endoribonuclease YbeY (154 aa).

H113, H117, and H123 together coordinate Zn(2+).

The protein belongs to the endoribonuclease YbeY family. Requires Zn(2+) as cofactor.

Its subcellular location is the cytoplasm. Single strand-specific metallo-endoribonuclease involved in late-stage 70S ribosome quality control and in maturation of the 3' terminus of the 16S rRNA. This Aeromonas hydrophila subsp. hydrophila (strain ATCC 7966 / DSM 30187 / BCRC 13018 / CCUG 14551 / JCM 1027 / KCTC 2358 / NCIMB 9240 / NCTC 8049) protein is Endoribonuclease YbeY.